Here is a 153-residue protein sequence, read N- to C-terminus: Regulatory protein RecX (153 aa).

Belongs to the RecX family.

The protein resides in the cytoplasm. In terms of biological role, modulates RecA activity. The chain is Regulatory protein RecX from Neisseria gonorrhoeae (strain ATCC 700825 / FA 1090).